Consider the following 384-residue polypeptide: 8-amino-7-oxononanoate synthase (384 aa).

R21 provides a ligand contact to substrate. Residue 108–109 (GF) participates in pyridoxal 5'-phosphate binding. H133 provides a ligand contact to substrate. Pyridoxal 5'-phosphate-binding residues include S179, H207, and T233. At K236 the chain carries N6-(pyridoxal phosphate)lysine. T352 contributes to the substrate binding site.

This sequence belongs to the class-II pyridoxal-phosphate-dependent aminotransferase family. BioF subfamily. As to quaternary structure, homodimer. Pyridoxal 5'-phosphate is required as a cofactor.

The catalysed reaction is 6-carboxyhexanoyl-[ACP] + L-alanine + H(+) = (8S)-8-amino-7-oxononanoate + holo-[ACP] + CO2. The protein operates within cofactor biosynthesis; biotin biosynthesis. Functionally, catalyzes the decarboxylative condensation of pimeloyl-[acyl-carrier protein] and L-alanine to produce 8-amino-7-oxononanoate (AON), [acyl-carrier protein], and carbon dioxide. This chain is 8-amino-7-oxononanoate synthase, found in Escherichia coli O9:H4 (strain HS).